A 274-amino-acid chain; its full sequence is Leucyl/phenylalanyl-tRNA--protein transferase (274 aa).

This sequence belongs to the L/F-transferase family.

It is found in the cytoplasm. The enzyme catalyses N-terminal L-lysyl-[protein] + L-leucyl-tRNA(Leu) = N-terminal L-leucyl-L-lysyl-[protein] + tRNA(Leu) + H(+). It carries out the reaction N-terminal L-arginyl-[protein] + L-leucyl-tRNA(Leu) = N-terminal L-leucyl-L-arginyl-[protein] + tRNA(Leu) + H(+). It catalyses the reaction L-phenylalanyl-tRNA(Phe) + an N-terminal L-alpha-aminoacyl-[protein] = an N-terminal L-phenylalanyl-L-alpha-aminoacyl-[protein] + tRNA(Phe). Its function is as follows. Functions in the N-end rule pathway of protein degradation where it conjugates Leu, Phe and, less efficiently, Met from aminoacyl-tRNAs to the N-termini of proteins containing an N-terminal arginine or lysine. The polypeptide is Leucyl/phenylalanyl-tRNA--protein transferase (Psychrobacter cryohalolentis (strain ATCC BAA-1226 / DSM 17306 / VKM B-2378 / K5)).